The following is a 240-amino-acid chain: Probable Ni/Fe-hydrogenase B-type cytochrome subunit (240 aa).

The next 4 helical transmembrane spans lie at 31 to 51, 75 to 95, 142 to 163, and 196 to 213; these read LWHW…YFIG, FAAG…AFVG, LAMF…FALY, and LGMW…YLAV.

This sequence belongs to the HupC/HyaC/HydC family.

It is found in the cell membrane. Functionally, probable b-type cytochrome. This is Probable Ni/Fe-hydrogenase B-type cytochrome subunit (hoxZ) from Azotobacter vinelandii.